The primary structure comprises 295 residues: MLIIDGKKVSLDMKEELKASVESYRSITGKVPGLTVIIVGSDPASEVYVRNKAKTCKEVGMNSSVIELQEDTPEAHLLEVIDSLNRDPAVHGILVQQPLPKQIDEFAVTLAIDPAKDVDGFHPENLGRLVMGHLDKCFVSCTPYGILELIGRYGIETSGKHCVVIGRSNIVGKPMANLMMQKLKESNCTVTVCHSATKDIASYTRQADILIAAIGRAKFVTADMVKQGAVVIDVGINRIEDPTTKSGTRLVGDVDYEGVSAKAAAMTPVPGGVGPMTIAMLLKNTLHSFERANGL.

NADP(+) is bound by residues 166-168 (GRS), serine 195, and isoleucine 236.

This sequence belongs to the tetrahydrofolate dehydrogenase/cyclohydrolase family. In terms of assembly, homodimer.

It catalyses the reaction (6R)-5,10-methylene-5,6,7,8-tetrahydrofolate + NADP(+) = (6R)-5,10-methenyltetrahydrofolate + NADPH. It carries out the reaction (6R)-5,10-methenyltetrahydrofolate + H2O = (6R)-10-formyltetrahydrofolate + H(+). It functions in the pathway one-carbon metabolism; tetrahydrofolate interconversion. In terms of biological role, catalyzes the oxidation of 5,10-methylenetetrahydrofolate to 5,10-methenyltetrahydrofolate and then the hydrolysis of 5,10-methenyltetrahydrofolate to 10-formyltetrahydrofolate. The polypeptide is Bifunctional protein FolD (Chlorobium luteolum (strain DSM 273 / BCRC 81028 / 2530) (Pelodictyon luteolum)).